Reading from the N-terminus, the 400-residue chain is Elongation factor Tu (400 aa).

In terms of domain architecture, tr-type G spans 10–208 (KPHLNVGTIG…TMDSYFPEPQ (199 aa)). A G1 region spans residues 19–26 (GHIDHGKT). Residue 19–26 (GHIDHGKT) coordinates GTP. A Mg(2+)-binding site is contributed by Thr26. The interval 60–64 (GITIN) is G2. Residues 81 to 84 (DCPG) are G3. GTP contacts are provided by residues 81–85 (DCPGH) and 136–139 (NKTD). The segment at 136 to 139 (NKTD) is G4. The tract at residues 174-176 (SAL) is G5.

It belongs to the TRAFAC class translation factor GTPase superfamily. Classic translation factor GTPase family. EF-Tu/EF-1A subfamily. As to quaternary structure, monomer.

Its subcellular location is the cytoplasm. The enzyme catalyses GTP + H2O = GDP + phosphate + H(+). Functionally, GTP hydrolase that promotes the GTP-dependent binding of aminoacyl-tRNA to the A-site of ribosomes during protein biosynthesis. This chain is Elongation factor Tu, found in Thermosipho africanus (strain TCF52B).